A 452-amino-acid chain; its full sequence is Cell division protein FtsZ (452 aa).

Residues 24-28, 111-113, Glu142, Arg146, and Asp190 contribute to the GTP site; these read GAGSN and GTG.

Belongs to the FtsZ family. Homodimer. Polymerizes to form a dynamic ring structure in a strictly GTP-dependent manner. Interacts directly with several other division proteins.

The protein resides in the cytoplasm. In terms of biological role, essential cell division protein that forms a contractile ring structure (Z ring) at the future cell division site. The regulation of the ring assembly controls the timing and the location of cell division. One of the functions of the FtsZ ring is to recruit other cell division proteins to the septum to produce a new cell wall between the dividing cells. Binds GTP and shows GTPase activity. The sequence is that of Cell division protein FtsZ from Rickettsia prowazekii (strain Madrid E).